Reading from the N-terminus, the 69-residue chain is Lantibiotic lichenicidin A2 (69 aa).

Positions 1 to 37 are excised as a propeptide; sequence MKNSAAREAFKGANHPAGMVSEEELKALVGGNDVNPE. Thr-38 bears the 2-oxobutanoic acid mark. 3 positions are modified to (Z)-2,3-didehydrobutyrine: Thr-39, Thr-42, and Thr-43. The lanthionine (Ser-Cys) cross-link spans 44-48; it reads SSWTC. A 2,3-didehydroalanine (Ser) modification is found at Ser-45. A (Z)-2,3-didehydrobutyrine mark is found at Thr-50 and Thr-54. Positions 56–60 form a cross-link, lanthionine (Ser-Cys); that stretch reads SASLC. 2 cross-links (beta-methyllanthionine (Thr-Cys)) span residues 62–65 and 66–69; these read TTKC and TSRC. Thr-63 carries the post-translational modification (Z)-2,3-didehydrobutyrine.

Post-translationally, maturation of lantibiotics involves the enzymatic conversion of Thr, and Ser into dehydrated AA and the formation of thioether bonds with cysteine. This is followed by membrane translocation and cleavage of the modified precursor.

It localises to the secreted. It is found in the cell wall. Its function is as follows. Lanthionine-containing peptide antibiotic (lantibiotic) active on Gram-positive bacteria. The bactericidal activity of lantibiotics is based on depolarization of energized bacterial cytoplasmic membranes, initiated by the formation of aqueous transmembrane pores. When present individually, LchA2 exhibits activity towards L.lactis HP. When combined with LchA1, it displays activity towards a broad spectrum of non-pathogenic and pathogenic Gram-positive bacteria including strains of L.monocytogenes, methicillin-resistant S.aureus, S.pneumoniae and strains of vancomycin-resistant enterococci, but not towards E.faecium L4001 and BM4147-1. Combined LchA1 and LchA2 peptides also inhibit Bacillus sp. HIL-Y85/54728, L.lactis DPC3417 and B.halodurans C-125, which produce lantibiotics themselves. Inactivated by proteinase K and pronase E, but not by trypsin and chymotrypsin. The polypeptide is Lantibiotic lichenicidin A2 (Bacillus licheniformis (strain ATCC 14580 / DSM 13 / JCM 2505 / CCUG 7422 / NBRC 12200 / NCIMB 9375 / NCTC 10341 / NRRL NRS-1264 / Gibson 46)).